A 530-amino-acid polypeptide reads, in one-letter code: TNF receptor-associated factor family protein DDB_G0272829 (530 aa).

The RING-type; degenerate zinc finger occupies 35-81 (CQICEGLLISSLIPNRMKALQCINGHCFCLTCWESILEIKSECPTCR). 2 TRAF-type zinc fingers span residues 134 to 188 (RHES…KQMQ) and 189 to 246 (GHIL…NDND). Disordered stretches follow at residues 242 to 267 (NNDNDNNDSDENNSNQSLSSSSLSSS), 391 to 432 (TTTT…DNQG), and 483 to 530 (FNQL…GTSL). Composition is skewed to low complexity over residues 253–267 (NNSNQSLSSSSLSSS), 391–415 (TTTTTSTSDKNNNNNNNNNNNNNNN), and 485–502 (QLSQPQTQPQSQSQSQSL). Residues 361–422 (ILEHQQQQNQ…NNNNEDEEDD (62 aa)) adopt a coiled-coil conformation. Residues 509 to 530 (ITINQNQNTPSNPFSIFSGTSL) are compositionally biased toward polar residues.

This sequence belongs to the TNF receptor-associated factor family.

Its subcellular location is the cytoplasm. Functionally, probable adapter protein and signal transducer that links members of the tumor necrosis factor receptor family to different signaling pathways by association with the receptor cytoplasmic domain and kinases. This Dictyostelium discoideum (Social amoeba) protein is TNF receptor-associated factor family protein DDB_G0272829.